Reading from the N-terminus, the 444-residue chain is Chitinase-like protein Idgf1 (444 aa).

The N-terminal stretch at 1–20 (MTSLLFVILNIILTLHLCAG) is a signal peptide. The region spanning 29–444 (KRLICYYDAQ…PILRSVRGHL (416 aa)) is the GH18 domain. Cysteine 33 and cysteine 60 are disulfide-bonded. Residues asparagine 213, asparagine 225, and asparagine 335 are each glycosylated (N-linked (GlcNAc...) asparagine). An intrachain disulfide couples cysteine 346 to cysteine 429.

The protein belongs to the glycosyl hydrolase 18 family. IDGF subfamily. In terms of processing, glycosylated.

It localises to the secreted. Cooperates with insulin-like peptides to stimulate the proliferation, polarization and motility of imaginal disk cells. May act by stabilizing the binding of insulin-like peptides to its receptor through a simultaneous interaction with both molecules to form a multiprotein signaling complex. The protein is Chitinase-like protein Idgf1 (Idgf1) of Glossina morsitans morsitans (Savannah tsetse fly).